Here is a 389-residue protein sequence, read N- to C-terminus: Phosphatidylglycerol--prolipoprotein diacylglyceryl transferase (389 aa).

4 helical membrane-spanning segments follow: residues 28 to 48 (IIVA…LIYF), 58 to 78 (FFIF…YFLI), 98 to 118 (LAIQ…FNVF), and 148 to 168 (ISVF…QAIG). Arg-169 serves as a coordination point for a 1,2-diacyl-sn-glycero-3-phospho-(1'-sn-glycerol). 3 helical membrane-spanning segments follow: residues 220-240 (IPLF…IYFV), 281-301 (IVFS…CQTL), and 309-329 (FWTY…TTLF).

This sequence belongs to the Lgt family.

The protein resides in the cell membrane. It catalyses the reaction L-cysteinyl-[prolipoprotein] + a 1,2-diacyl-sn-glycero-3-phospho-(1'-sn-glycerol) = an S-1,2-diacyl-sn-glyceryl-L-cysteinyl-[prolipoprotein] + sn-glycerol 1-phosphate + H(+). It functions in the pathway protein modification; lipoprotein biosynthesis (diacylglyceryl transfer). Functionally, catalyzes the transfer of the diacylglyceryl group from phosphatidylglycerol to the sulfhydryl group of the N-terminal cysteine of a prolipoprotein, the first step in the formation of mature lipoproteins. This chain is Phosphatidylglycerol--prolipoprotein diacylglyceryl transferase, found in Mycoplasma pneumoniae (strain ATCC 29342 / M129 / Subtype 1) (Mycoplasmoides pneumoniae).